The primary structure comprises 523 residues: Exodeoxyribonuclease 7 large subunit (523 aa).

The interval 502–523 (PGASPAARTRAGKAKADQGSLF) is disordered.

This sequence belongs to the XseA family. As to quaternary structure, heterooligomer composed of large and small subunits.

Its subcellular location is the cytoplasm. The enzyme catalyses Exonucleolytic cleavage in either 5'- to 3'- or 3'- to 5'-direction to yield nucleoside 5'-phosphates.. Bidirectionally degrades single-stranded DNA into large acid-insoluble oligonucleotides, which are then degraded further into small acid-soluble oligonucleotides. The chain is Exodeoxyribonuclease 7 large subunit from Rhodospirillum centenum (strain ATCC 51521 / SW).